The sequence spans 263 residues: Pyrrolysine synthase (263 aa).

4 residues coordinate L-pyrrolysine: Leu8, Val57, Ile64, and Ala107. NAD(+) is bound by residues Lys155, Val156, Asp175, Cys210, Pro228, Ile230, and Glu249.

Belongs to the PylD family.

It carries out the reaction (3R)-3-methyl-D-ornithyl-N(6)-L-lysine + NAD(+) = L-pyrrolysine + NH4(+) + NADH + 2 H(+). Its pathway is amino-acid biosynthesis; L-pyrrolysine biosynthesis. Catalyzes the ultimate step of the pyrrolysine biosynthesis pathway by converting the isopeptide (3R)-3-methyl-D-ornithyl-N(6)-L-lysine to the 22nd proteinogenic amino acid. Is able to use surrogate substrates such as (3R)-D-ornithyl-N(6)-L-lysine in vitro. This chain is Pyrrolysine synthase, found in Methanosarcina barkeri (strain Fusaro / DSM 804).